The primary structure comprises 173 residues: DELTA-actitoxin-Oor1b (173 aa).

The tract at residues Gly6–Ser25 is N-terminal region. The phosphocholine site is built by Ser49, Val82, Ser100, Pro102, Tyr128, and Tyr133. The segment at Ser100 to Lys115 is trp-rich region, which is important for the binding to lipid membrane.

It belongs to the actinoporin family. Sea anemone subfamily. Octamer or nonamer in membranes. Monomer in the soluble state.

The protein localises to the secreted. Its subcellular location is the nematocyst. It is found in the target cell membrane. Functionally, pore-forming protein that forms cations-selective hydrophilic pores of around 1 nm and causes cardiac stimulation and cytolysis. Pore formation is a multi-step process that involves specific recognition of membrane sphingomyelin (but neither cholesterol nor phosphatidylcholine) using aromatic rich region and adjacent phosphocholine (POC) binding site, firm binding to the membrane (mainly driven by hydrophobic interactions) accompanied by the transfer of the N-terminal region to the lipid-water interface and finally pore formation after oligomerization of monomers. Cytolytic effects include red blood cells hemolysis, platelet aggregation and lysis, cytotoxic and cytostatic effects on fibroblasts. Lethality in mammals has been ascribed to severe vasospasm of coronary vessels, cardiac arrhythmia, and inotropic effects. The sequence is that of DELTA-actitoxin-Oor1b from Oulactis orientalis (Japan anemone).